The following is a 992-amino-acid chain: Disks large-associated protein 1 (992 aa).

2 disordered regions span residues 154 to 209 and 355 to 375; these read SLEG…SWWS and KAMG…SPKV. Phosphoserine is present on serine 169. Over residues 195–209 the composition is skewed to low complexity; that stretch reads SNASNASPTSPSWWS. A phosphoserine mark is found at serine 362, serine 365, serine 368, serine 372, serine 389, serine 418, serine 421, serine 425, serine 428, serine 437, serine 509, serine 516, and serine 578. At threonine 579 the chain carries Phosphothreonine. Serine 581 and serine 605 each carry phosphoserine. Phosphothreonine is present on threonine 606. Residues serine 608 and serine 611 each carry the phosphoserine modification. 2 interaction with DYL2 regions span residues 665–676 and 687–698; these read LSIGIQVDDAEE and SKFQSVGVQVEE. The interval 914–980 is disordered; that stretch reads WKQMDPLDKK…QNSATESAES (67 aa). Basic and acidic residues-rich tracts occupy residues 918-927 and 943-958; these read DPLDKKERRA and IRER…EARK. Position 947 is a phosphoserine (serine 947). Over residues 969-978 the composition is skewed to polar residues; sequence VRQNSATESA. The PDZ-binding signature appears at 990–992; sequence TRL.

It belongs to the SAPAP family. In terms of assembly, interacts with guanylate kinase-like domain of DLG1, DLG2, DLG3, DLG4 and AIP1. Interacts with the PDZ domain of SHANK1, SHANK2 and SHANK3. Found in a complex with DLG4 and SHANK1, SHANK2 or SHANK3. Found in a complex with DLG4 and BEGAIN. Interacts with DYL2 and LRFN1. Interacts with MPP2 (via the SH3-Guanylate kinase-like sub-module). Post-translationally, ubiquitinated by TRIM3; leading to proteasomal degradation. In terms of tissue distribution, expressed in brain and testis.

It localises to the cell membrane. The protein resides in the postsynaptic density. It is found in the synapse. Part of the postsynaptic scaffold in neuronal cells. This Rattus norvegicus (Rat) protein is Disks large-associated protein 1.